The sequence spans 537 residues: Glutamyl-tRNA(Gln) amidotransferase subunit B, chloroplastic/mitochondrial (537 aa).

The protein belongs to the GatB/GatE family. GatB subfamily. Subunit of the heterotrimeric GatCAB amidotransferase (AdT) complex, composed of A, B and C subunits.

It is found in the mitochondrion. The protein localises to the plastid. Its subcellular location is the chloroplast. It catalyses the reaction L-glutamyl-tRNA(Gln) + L-glutamine + ATP + H2O = L-glutaminyl-tRNA(Gln) + L-glutamate + ADP + phosphate + H(+). In terms of biological role, allows the formation of correctly charged Gln-tRNA(Gln) through the transamidation of misacylated Glu-tRNA(Gln) in chloroplasts and mitochondria. The reaction takes place in the presence of glutamine and ATP through an activated gamma-phospho-Glu-tRNA(Gln). This is Glutamyl-tRNA(Gln) amidotransferase subunit B, chloroplastic/mitochondrial from Ostreococcus tauri.